The following is a 1048-amino-acid chain: Protein argonaute 7 (1048 aa).

The span at 1–14 (MEGEREGVVAKNED) shows a compositional bias: basic and acidic residues. Disordered regions lie at residues 1–50 (MEGE…GSSG) and 121–141 (KAADAAPRGSMWKHRPSKKPP). The segment covering 16-37 (AGGGGGGLGTGGNGGGGGGGSA) has biased composition (gly residues). A compositionally biased stretch (basic residues) spans 131 to 141 (MWKHRPSKKPP). One can recognise a PAZ domain in the interval 422–530 (KRCDFLKDLP…VPMELCVVCE (109 aa)). Residues 709-1017 (LLICVMERRH…AAYRGRLYLE (309 aa)) enclose the Piwi domain.

This sequence belongs to the argonaute family. Ago subfamily. In terms of tissue distribution, expressed in the reproductive shoot apex.

Involved in the RNA silencing pathway. May bind to short RNAs such as microRNAs (miRNAs) or short interfering RNAs (siRNAs), and represses the translation of mRNAs which are complementary to them. Regulates shoot apical meristem (SAM) initiation and maintenance and leaf polarization through the trans-acting siRNAS (ta-siRNAs) pathway which probably modulates the expression of the ARF2, ARF3, ARF4, ARF14 and ARF15 genes. This is Protein argonaute 7 (AGO7) from Oryza sativa subsp. japonica (Rice).